A 62-amino-acid polypeptide reads, in one-letter code: Small ribosomal subunit protein eS27 (62 aa).

Zn(2+)-binding residues include C17, C20, C36, and C39. The C4-type zinc finger occupies 17–39 (CPECNNEQIVFGSPATVVKCLTC).

This sequence belongs to the eukaryotic ribosomal protein eS27 family. As to quaternary structure, part of the 30S ribosomal subunit. Zn(2+) serves as cofactor.

This chain is Small ribosomal subunit protein eS27, found in Methanocaldococcus jannaschii (strain ATCC 43067 / DSM 2661 / JAL-1 / JCM 10045 / NBRC 100440) (Methanococcus jannaschii).